Reading from the N-terminus, the 616-residue chain is Chaperone protein HscA homolog (616 aa).

It belongs to the heat shock protein 70 family.

Its function is as follows. Chaperone involved in the maturation of iron-sulfur cluster-containing proteins. Has a low intrinsic ATPase activity which is markedly stimulated by HscB. This Tolumonas auensis (strain DSM 9187 / NBRC 110442 / TA 4) protein is Chaperone protein HscA homolog.